Reading from the N-terminus, the 87-residue chain is MAHKKAGGSSRNGRDSESKRLGVKVYGGQAINAGGIIVRQRGTRMHPGENVGMGKDHTLFALTDGHVNFSTKGAAKKHMVNVVPAAV.

Residues 1–21 (MAHKKAGGSSRNGRDSESKRL) form a disordered region.

Belongs to the bacterial ribosomal protein bL27 family.

This chain is Large ribosomal subunit protein bL27, found in Paraburkholderia xenovorans (strain LB400).